The primary structure comprises 277 residues: F-actin-capping protein subunit beta isoforms 1 and 2 (277 aa).

An N-acetylserine modification is found at Ser-2.

It belongs to the F-actin-capping protein beta subunit family. As to quaternary structure, component of the F-actin capping complex, composed of a heterodimer of an alpha and a beta subunit. Component of the WASH complex. In terms of assembly, component of the F-actin capping complex, composed of a heterodimer of an alpha and a beta subunit. Subunit of dynactin, a multiprotein complex part of a tripartite complex with dynein and a adapter, such as BICDL1, BICD2 or HOOK3. The dynactin complex is built around ACTR1A/ACTB filament and consists of an actin-related filament composed of a shoulder domain, a pointed end and a barbed end. Its length is defined by its flexible shoulder domain. In terms of tissue distribution, isoform 1 is detected in pectoral muscle, cardiac muscle and gizzard. Isoform 2 is detected in brain and liver (at protein level). Isoform 2 is the predominant isoform of nonmuscle tissues and isoform 1 is the predominant isoform of muscle tissues.

It is found in the cytoplasm. It localises to the myofibril. The protein resides in the sarcomere. Its subcellular location is the z line. The protein localises to the i band. It is found in the cytoskeleton. Its function is as follows. F-actin-capping proteins bind in a Ca(2+)-independent manner to the fast growing ends of actin filaments (barbed end) thereby blocking the exchange of subunits at these ends. Unlike other capping proteins (such as gelsolin and severin), these proteins do not sever actin filaments. May play a role in the regulation of cell morphology and cytoskeletal organization. Forms, with CAPZB, the barbed end of the fast growing ends of actin filaments in the dynactin complex and stabilizes dynactin structure. The dynactin multiprotein complex activates the molecular motor dynein for ultra-processive transport along microtubules. This is F-actin-capping protein subunit beta isoforms 1 and 2 (CAPZB) from Gallus gallus (Chicken).